The sequence spans 95 residues: Integration host factor subunit beta (95 aa).

Residues 56–95 (RAPRTGRNPKTGETVELDGKHVPHFKPGKELRDRVNESIA) are disordered. Positions 72–95 (LDGKHVPHFKPGKELRDRVNESIA) are enriched in basic and acidic residues.

This sequence belongs to the bacterial histone-like protein family. In terms of assembly, heterodimer of an alpha and a beta chain.

In terms of biological role, this protein is one of the two subunits of integration host factor, a specific DNA-binding protein that functions in genetic recombination as well as in transcriptional and translational control. The sequence is that of Integration host factor subunit beta from Pseudoalteromonas translucida (strain TAC 125).